Here is a 711-residue protein sequence, read N- to C-terminus: Retrovirus-related Pol polyprotein from type-1 retrotransposable element R2 (711 aa).

A Reverse transcriptase domain is found at 45–323; that stretch reads LHLLRGHVPT…QTFRYLGHFF (279 aa). The tract at residues 444–711 is nucleic acid-binding endonuclease; that stretch reads LFSCPSFDHL…RAVWSRQAGA (268 aa).

The enzyme catalyses DNA(n) + a 2'-deoxyribonucleoside 5'-triphosphate = DNA(n+1) + diphosphate. The sequence is that of Retrovirus-related Pol polyprotein from type-1 retrotransposable element R2 from Popillia japonica (Japanese beetle).